Reading from the N-terminus, the 248-residue chain is Granzyme E (248 aa).

Positions 1 to 18 (MPPVLILLTLLLPLGAGA) are cleaved as a signal peptide. Positions 19 to 20 (EE) are excised as a propeptide. Residues 21 to 246 (IIGGHVVKPH…FLPWISRNMK (226 aa)) form the Peptidase S1 domain. Cys-50 and Cys-66 are oxidised to a cystine. The Charge relay system role is filled by His-65. N-linked (GlcNAc...) asparagine glycosylation is found at Asn-68 and Asn-102. Asp-109 functions as the Charge relay system in the catalytic mechanism. Cystine bridges form between Cys-143-Cys-210 and Cys-175-Cys-189. An N-linked (GlcNAc...) asparagine glycan is attached at Asn-154. The active-site Charge relay system is the Ser-204. A glycan (N-linked (GlcNAc...) asparagine) is linked at Asn-223.

It belongs to the peptidase S1 family. Granzyme subfamily.

It is found in the cytolytic granule. In terms of biological role, this enzyme is probably necessary for target cell lysis in cell-mediated immune responses. In Mus musculus (Mouse), this protein is Granzyme E (Gzme).